The following is a 396-amino-acid chain: Phosphoglycerate kinase (396 aa).

Substrate is bound by residues 21–23 (DLN), Arg-36, 59–62 (HFGR), Arg-118, and Arg-151. Residues Lys-201, Glu-323, and 353 to 356 (GGDT) contribute to the ATP site.

The protein belongs to the phosphoglycerate kinase family. In terms of assembly, monomer.

The protein resides in the cytoplasm. The enzyme catalyses (2R)-3-phosphoglycerate + ATP = (2R)-3-phospho-glyceroyl phosphate + ADP. It participates in carbohydrate degradation; glycolysis; pyruvate from D-glyceraldehyde 3-phosphate: step 2/5. The sequence is that of Phosphoglycerate kinase from Rhodospirillum centenum (strain ATCC 51521 / SW).